Reading from the N-terminus, the 957-residue chain is MTQTLSQLENSGAFIERHIGPDAAQQQEMLNAVGAQSLNALTGQIVPKDIQLATPPQVGAPATEYAALAELKAIASRNKRFTSYIGMGYTAVQLPPVILRNMLENPGWYTAYTPYQPEVSQGRLEALLNFQQVTLDLTGLDMASASLLDEATAAAEAMAMAKRVSKLKNANRFFVASDVHPQTLDVVRTRAETFGFEVIVDDAQKVLDHQDVFGVLLQQVGTTGEIHDYTALISELKSRKIVVSVAADIMALVLLTAPGKQGADIVFGSAQRFGVPMGYGGPHAAFFAAKDEYKRSMPGRIIGVSKDAAGNTALRMAMQTREQHIRREKANSNICTSQVLLANIASLYAVYHGPVGLKRIANRIHRLTDILAAGLQQKGLKLRHAHYFDTLCVEVADKAGVLARAEAAEINLRSDILNAVGITLDETTTRENVMQLFSVLLGDNHGLDIDTLDKDVAHDSRSIQAAMLRDDEILTHPVFNRYHSETEMMRYMHSLERKDLALNQAMIPLGSCTMKLNAAAEMIPITWPEFAELHPFCPPEQAEGYQQMIAQLADWLVKLTGYDAVCMQPNSGAQGEYAGLLAIRHYHESRNEGHRDICLIPASAHGTNPASAHMSGMQVVVVACDKNGNIDLTDLRAKAEQAGDNLSCIMVTYPSTHGVYEETIREVCEVVHQFGGQVYLDGANMNAQVGITSPGFIGADVSHLNLHKTFCIPHGGGGPGMGPIGVKAHLAPFVPGHSVVQIEGMLTRQGAVSAAPFGSASILPISWMYIRMMGAEGLKKASQVAILNANYIASRLQDAFPVLYTGRDGRVAHECILDIRPLKEETGISELDIAKRLIDYGFHAPTMSFPVAGTLMVEPTESESKVELDRFIDAMLAIRAEIDQVKAGVWPLEDNPLVNAPHIQSELVAEWAHPYSREVAVFPAGVADKYWPTVKRLDDVYGDRNLFCSCVPISEYQ.

K708 carries the N6-(pyridoxal phosphate)lysine modification.

Belongs to the GcvP family. As to quaternary structure, the glycine cleavage system is composed of four proteins: P, T, L and H. It depends on pyridoxal 5'-phosphate as a cofactor.

The enzyme catalyses N(6)-[(R)-lipoyl]-L-lysyl-[glycine-cleavage complex H protein] + glycine + H(+) = N(6)-[(R)-S(8)-aminomethyldihydrolipoyl]-L-lysyl-[glycine-cleavage complex H protein] + CO2. Functionally, the glycine cleavage system catalyzes the degradation of glycine. The P protein binds the alpha-amino group of glycine through its pyridoxal phosphate cofactor; CO(2) is released and the remaining methylamine moiety is then transferred to the lipoamide cofactor of the H protein. The chain is Glycine dehydrogenase (decarboxylating) from Escherichia coli O6:H1 (strain CFT073 / ATCC 700928 / UPEC).